Reading from the N-terminus, the 344-residue chain is UDP-3-O-acylglucosamine N-acyltransferase (344 aa).

Residue His-244 is the Proton acceptor of the active site.

Belongs to the transferase hexapeptide repeat family. LpxD subfamily. In terms of assembly, homotrimer.

The catalysed reaction is a UDP-3-O-[(3R)-3-hydroxyacyl]-alpha-D-glucosamine + a (3R)-hydroxyacyl-[ACP] = a UDP-2-N,3-O-bis[(3R)-3-hydroxyacyl]-alpha-D-glucosamine + holo-[ACP] + H(+). It functions in the pathway bacterial outer membrane biogenesis; LPS lipid A biosynthesis. Functionally, catalyzes the N-acylation of UDP-3-O-acylglucosamine using 3-hydroxyacyl-ACP as the acyl donor. Is involved in the biosynthesis of lipid A, a phosphorylated glycolipid that anchors the lipopolysaccharide to the outer membrane of the cell. The polypeptide is UDP-3-O-acylglucosamine N-acyltransferase (Pseudoalteromonas atlantica (strain T6c / ATCC BAA-1087)).